We begin with the raw amino-acid sequence, 890 residues long: Leucine--tRNA ligase (890 aa).

Residues 48 to 58 carry the 'HIGH' region motif; that stretch reads PYPSGKLHMGH. A 'KMSKS' region motif is present at residues 645–649; the sequence is KMSKS. Lys648 contacts ATP.

Belongs to the class-I aminoacyl-tRNA synthetase family.

The protein localises to the cytoplasm. It carries out the reaction tRNA(Leu) + L-leucine + ATP = L-leucyl-tRNA(Leu) + AMP + diphosphate. In Polynucleobacter necessarius subsp. necessarius (strain STIR1), this protein is Leucine--tRNA ligase.